A 185-amino-acid polypeptide reads, in one-letter code: Somatotropin (185 aa).

A disulfide bond links C52 and C158. E167 serves as a coordination point for Zn(2+). Cysteines 175 and 183 form a disulfide.

The protein belongs to the somatotropin/prolactin family.

Its subcellular location is the secreted. Growth hormone plays an important role in growth control and is involved in the regulation of several anabolic processes. Implicated as an osmoregulatory substance important for seawater adaptation. The protein is Somatotropin (gh) of Katsuwonus pelamis (Skipjack tuna).